A 692-amino-acid polypeptide reads, in one-letter code: Threonine--tRNA ligase (692 aa).

The TGS domain maps to 2–59 (AEAHISITVNGEAKEVEASQTGVELFADDKNIIAVRLNGELRDLYTPLHDGDNVESVT). Positions 255-561 (DHRKLGQEMD…LLEHYAGAFP (307 aa)) are catalytic. Residues Cys-360, His-411, and His-538 each coordinate Zn(2+).

This sequence belongs to the class-II aminoacyl-tRNA synthetase family. In terms of assembly, homodimer. It depends on Zn(2+) as a cofactor.

The protein resides in the cytoplasm. The enzyme catalyses tRNA(Thr) + L-threonine + ATP = L-threonyl-tRNA(Thr) + AMP + diphosphate + H(+). Its function is as follows. Catalyzes the attachment of threonine to tRNA(Thr) in a two-step reaction: L-threonine is first activated by ATP to form Thr-AMP and then transferred to the acceptor end of tRNA(Thr). Also edits incorrectly charged L-seryl-tRNA(Thr). The protein is Threonine--tRNA ligase of Bifidobacterium animalis subsp. lactis (strain AD011).